The sequence spans 110 residues: MTKDAVNLDAYTVSFMPFYTEYQGPTEEFKDYKFEDTIYFRGKELKREKSATPSSSDNTTSNTFSNGAILSGNTITGKIVSVNNYEREGTDRNELARLQELISLIDVINQ.

The segment at 45–69 is disordered; sequence LKREKSATPSSSDNTTSNTFSNGAI. Residues 51 to 66 show a composition bias toward low complexity; sequence ATPSSSDNTTSNTFSN.

Belongs to the RNase H2 subunit C family. Highly divergent. The RNase 2 complex is a heterotrimer composed of the catalytic subunit RNH201 and of the non-catalytic subunits RNH202 and RNH203.

Its subcellular location is the cytoplasm. The protein localises to the nucleus. Its function is as follows. Non catalytic subunit of RNase H2, an endonuclease that specifically degrades the RNA of RNA:DNA hybrids. Participates in DNA replication, possibly by mediating the removal of lagging-strand Okazaki fragment RNA primers during DNA replication. Mediates the excision of single ribonucleotides from DNA:RNA duplexes. The polypeptide is Ribonuclease H2 subunit C (RNH203) (Saccharomyces cerevisiae (strain ATCC 204508 / S288c) (Baker's yeast)).